A 255-amino-acid chain; its full sequence is Small ribosomal subunit protein eS1A (255 aa).

Residues 1-18 (MAVGKNKRLSKGKKGQKK) show a composition bias toward basic residues. The disordered stretch occupies residues 1–20 (MAVGKNKRLSKGKKGQKKRV). Ala2 is modified (N-acetylalanine; partial). Thr245 bears the Phosphothreonine mark. Lys248 participates in a covalent cross-link: Glycyl lysine isopeptide (Lys-Gly) (interchain with G-Cter in ubiquitin). Thr254 bears the Phosphothreonine mark.

This sequence belongs to the eukaryotic ribosomal protein eS1 family. In terms of assembly, component of the small ribosomal subunit. Mature ribosomes consist of a small (40S) and a large (60S) subunit. The 40S subunit contains about 33 different proteins and 1 molecule of RNA (18S). The 60S subunit contains about 49 different proteins and 3 molecules of RNA (25S, 5.8S and 5S).

It is found in the cytoplasm. This is Small ribosomal subunit protein eS1A from Saccharomyces cerevisiae (strain RM11-1a) (Baker's yeast).